A 189-amino-acid polypeptide reads, in one-letter code: Peptidyl-tRNA hydrolase (189 aa).

A tRNA-binding site is contributed by Tyr-16. Catalysis depends on His-21, which acts as the Proton acceptor. 3 residues coordinate tRNA: Phe-67, Asn-69, and Asn-115.

The protein belongs to the PTH family. As to quaternary structure, monomer.

It is found in the cytoplasm. It carries out the reaction an N-acyl-L-alpha-aminoacyl-tRNA + H2O = an N-acyl-L-amino acid + a tRNA + H(+). Its function is as follows. Hydrolyzes ribosome-free peptidyl-tRNAs (with 1 or more amino acids incorporated), which drop off the ribosome during protein synthesis, or as a result of ribosome stalling. Functionally, catalyzes the release of premature peptidyl moieties from peptidyl-tRNA molecules trapped in stalled 50S ribosomal subunits, and thus maintains levels of free tRNAs and 50S ribosomes. In Legionella pneumophila (strain Corby), this protein is Peptidyl-tRNA hydrolase.